Reading from the N-terminus, the 218-residue chain is Cell division protein SepF (218 aa).

A disordered region spans residues 25–115 (DVAASTDNVI…IANRREQYQQ (91 aa)). Over residues 29–43 (STDNVIPRSQQSVRA) the composition is skewed to polar residues. Residues 47–63 (PKQEPRNNHVQQDHQAR) show a composition bias toward basic and acidic residues.

The protein belongs to the SepF family. Homodimer. Interacts with FtsZ.

It localises to the cytoplasm. Functionally, cell division protein that is part of the divisome complex and is recruited early to the Z-ring. Probably stimulates Z-ring formation, perhaps through the cross-linking of FtsZ protofilaments. Its function overlaps with FtsA. This chain is Cell division protein SepF, found in Streptococcus pyogenes serotype M12 (strain MGAS2096).